A 478-amino-acid chain; its full sequence is tRNA (guanine-N(7)-)-methyltransferase non-catalytic subunit TRM82 (478 aa).

WD repeat units lie at residues 14–53, 73–113, 217–258, and 263–301; these read SSADGAAWTLFGASGSKIVVQSSNGVASVWSRQAVQVLDP, EQKF…GLQQ, GHVS…HIIE, and GHEEFVSRLCVTRSGLLVSGGGDAHLLVWDWRNFLLNEK.

Belongs to the WD repeat TRM82 family. In terms of assembly, forms a heterodimer with the catalytic subunit TRM8.

Its subcellular location is the nucleus. It participates in tRNA modification; N(7)-methylguanine-tRNA biosynthesis. Its function is as follows. Required for the formation of N(7)-methylguanine at position 46 (m7G46) in tRNA. In the complex, it is required to stabilize and induce conformational changes of the catalytic subunit. The chain is tRNA (guanine-N(7)-)-methyltransferase non-catalytic subunit TRM82 from Phaeosphaeria nodorum (strain SN15 / ATCC MYA-4574 / FGSC 10173) (Glume blotch fungus).